The sequence spans 29 residues: Galanin (29 aa).

Residue A29 is modified to Alanine amide.

The protein belongs to the galanin family.

The protein resides in the secreted. Functionally, contracts smooth muscle of the gastrointestinal and genitourinary tract, regulates growth hormone release, modulates insulin release, and may be involved in the control of adrenal secretion. The polypeptide is Galanin (GAL) (Alligator mississippiensis (American alligator)).